We begin with the raw amino-acid sequence, 219 residues long: Transcriptional activator protein rep2 (219 aa).

A zinc finger lies at 177 to 197 (CSKCNTTFNHSTALMMHEATC).

Its function is as follows. Transcriptional activator which interacts with the mcb binding subunit complex formed by res2 and cdc10. Rep2 is required for the mitotic cell cycle start. The polypeptide is Transcriptional activator protein rep2 (rep2) (Schizosaccharomyces pombe (strain 972 / ATCC 24843) (Fission yeast)).